Here is a 96-residue protein sequence, read N- to C-terminus: Large ribosomal subunit protein uL23 (96 aa).

Belongs to the universal ribosomal protein uL23 family. Part of the 50S ribosomal subunit. Contacts protein L29, and trigger factor when it is bound to the ribosome.

Its function is as follows. One of the early assembly proteins it binds 23S rRNA. One of the proteins that surrounds the polypeptide exit tunnel on the outside of the ribosome. Forms the main docking site for trigger factor binding to the ribosome. In Caldicellulosiruptor bescii (strain ATCC BAA-1888 / DSM 6725 / KCTC 15123 / Z-1320) (Anaerocellum thermophilum), this protein is Large ribosomal subunit protein uL23.